The chain runs to 1411 residues: Alpha-latroinsectotoxin-Lt1a (1411 aa).

A propeptide spanning residues 1–35 (ACSSPEVSIFHFFVYAGSFVKNFKKMKGSSAISKR) is cleaved from the precursor. The helix H8 is the probable transmembrane region of the tetrameric pore inserted in the target cell membrane stretch occupies residues 245 to 264 (ALYALFYGTETFISIMFYLV). ANK repeat units lie at residues 462 to 495 (DIHR…NVSE), 499 to 528 (LGRG…NLLE), 533 to 562 (NGYT…DVNV), 567 to 597 (DLFT…DLNA), 601 to 630 (SGFT…VINI), 634 to 663 (VGLT…YLND), 667 to 697 (NGMT…NINA), 702 to 732 (KKWT…NIRL), 736 to 765 (GGIN…DVTR), 769 to 798 (KGFS…NVND), 802 to 831 (SGVT…DIKA), 835 to 864 (NSQM…SLMN), 869 to 898 (RNEY…NVNE), 902 to 931 (NGNT…NFRL), 935 to 965 (ERKT…NLQA), 968 to 999 (RGKT…LNES), 1000 to 1029 (ECNP…NPAE), 1080 to 1109 (QENT…DPNQ), 1112 to 1142 (DGDP…DINT), and 1146 to 1175 (ERFT…DVNA). The propeptide occupies 1196–1411 (QSSRFLRSGH…KVNSNVSQIK (216 aa)). Residues 1230 to 1249 (DKLTQQISSKGTRSDSNSTE) show a composition bias toward polar residues. The segment at 1230-1254 (DKLTQQISSKGTRSDSNSTEGKMHS) is disordered. The stretch at 1331-1361 (NVHSKIYKAIMSGRRSVISEMLCSFAEEYSK) is one ANK 21 repeat.

The protein belongs to the cationic peptide 01 (latrotoxin) family. 02 (alpha-latroinsectotoxin) subfamily. Homotetramer in membranes. Expressed by the venom gland.

Its subcellular location is the secreted. The protein resides in the target cell membrane. Functionally, insecticidal presynaptic neurotoxin that induces massive neurotransmitter release at insect (but not vertebrate) neuromuscular junctions. Native toxin forms cation-permeable pores (with high permeability to calcium) in lipid membranes locust muscle membrane and artificial lipid bilayers. May bind to insect neurexin-1 homolog, insect adhesion G protein-coupled receptor L1 homolog, and insect receptor-type tyrosine-protein phosphatase S homolog, and induces neurotransmitter exocytosis both by forming tetrameric pores in membranes and signaling via G protein-coupled receptor. Oligomerization is a process independent of divalent cations. The toxin forms channels with 0.55-0.58 nm entrance diameter and a relatively small conductance in planar phospholipid membranes. This chain is Alpha-latroinsectotoxin-Lt1a, found in Latrodectus tredecimguttatus (Mediterranean black widow spider).